A 167-amino-acid chain; its full sequence is Shikimate kinase (167 aa).

8–15 (GFMGSGKT) lines the ATP pocket.

Belongs to the shikimate kinase family.

It is found in the cytoplasm. It catalyses the reaction shikimate + ATP = 3-phosphoshikimate + ADP + H(+). It functions in the pathway metabolic intermediate biosynthesis; chorismate biosynthesis; chorismate from D-erythrose 4-phosphate and phosphoenolpyruvate: step 5/7. The sequence is that of Shikimate kinase from Helicobacter hepaticus (strain ATCC 51449 / 3B1).